The chain runs to 210 residues: Large ribosomal subunit protein uL3 (210 aa).

It belongs to the universal ribosomal protein uL3 family. As to quaternary structure, part of the 50S ribosomal subunit. Forms a cluster with proteins L14 and L19.

One of the primary rRNA binding proteins, it binds directly near the 3'-end of the 23S rRNA, where it nucleates assembly of the 50S subunit. The protein is Large ribosomal subunit protein uL3 of Caldicellulosiruptor saccharolyticus (strain ATCC 43494 / DSM 8903 / Tp8T 6331).